The following is a 110-amino-acid chain: MEVLAKHRFARTSAQKARLVADQIRGLPVSKALEILTFSPKKAAVLVKKVLDSAIANAEHNEGADIDELRVGAVFVDEGPTMKRIMPRAKGRADRIMKRTSHITVVVADR.

This sequence belongs to the universal ribosomal protein uL22 family. As to quaternary structure, part of the 50S ribosomal subunit.

Its function is as follows. This protein binds specifically to 23S rRNA; its binding is stimulated by other ribosomal proteins, e.g. L4, L17, and L20. It is important during the early stages of 50S assembly. It makes multiple contacts with different domains of the 23S rRNA in the assembled 50S subunit and ribosome. Functionally, the globular domain of the protein is located near the polypeptide exit tunnel on the outside of the subunit, while an extended beta-hairpin is found that lines the wall of the exit tunnel in the center of the 70S ribosome. The sequence is that of Large ribosomal subunit protein uL22 from Shewanella denitrificans (strain OS217 / ATCC BAA-1090 / DSM 15013).